Here is a 143-residue protein sequence, read N- to C-terminus: Acetyltransferase plu1384 (143 aa).

Positions 1–138 constitute an N-acetyltransferase domain; sequence MEIRVFRQDD…ESVIFSKRLI (138 aa).

The protein belongs to the acetyltransferase family. YpeA subfamily.

The polypeptide is Acetyltransferase plu1384 (Photorhabdus laumondii subsp. laumondii (strain DSM 15139 / CIP 105565 / TT01) (Photorhabdus luminescens subsp. laumondii)).